The following is a 370-amino-acid chain: UDP-galactose transporter homolog 1 (370 aa).

10 helical membrane-spanning segments follow: residues 22 to 42 (ALTL…WSIL), 62 to 82 (IIIN…YNYV), 115 to 135 (CNVL…SPIG), 145 to 165 (LAYL…HFIF), 175 to 195 (YLVA…HVTT), 204 to 224 (TLLG…TNST), 242 to 262 (LMSL…IIFH), 280 to 300 (LIDI…IFII), 307 to 327 (IILI…SVIL), and 333 to 353 (SWEQ…EAFI).

This sequence belongs to the nucleotide-sugar transporter family. SLC35B subfamily.

It is found in the endoplasmic reticulum membrane. Its function is as follows. May be involved in specific transport of UDP-Gal from the cytosol to the Golgi lumen. Involved in the maintenance of optimal conditions for the folding of secretory pathway proteins in the endoplasmic reticulum. The sequence is that of UDP-galactose transporter homolog 1 (HUT1) from Candida albicans (strain SC5314 / ATCC MYA-2876) (Yeast).